The primary structure comprises 727 residues: Zinc metalloproteinase nas-38 (727 aa).

The first 25 residues, 1–25, serve as a signal peptide directing secretion; the sequence is MPSPSYNRHIIIASCFCCLLIFSSA. A propeptide spanning residues 26-114 is cleaved from the precursor; sequence ARVPKASKKH…FTQGKREKRK (89 aa). One can recognise a Peptidase M12A domain in the interval 113-312; that stretch reads RKIGRNPLYK…QAINMAYGCT (200 aa). Cystine bridges form between Cys158-Cys311 and Cys179-Cys199. Residue His207 coordinates Zn(2+). Residue Glu208 is part of the active site. Zn(2+)-binding residues include His211 and His217. The EGF-like domain occupies 306-345; it reads NMAYGCTESCADLPCLRNGYTHPNNCSMCACPEGLSGRYC. The N-linked (GlcNAc...) asparagine glycan is linked to Asn330. The CUB domain occupies 353–469; that stretch reads AQCGGVIFAT…AGFKAKFWSN (117 aa). Cystine bridges form between Cys355–Cys383 and Cys411–Cys432. 2 disordered regions span residues 473 to 506 and 532 to 561; these read PEGV…QSTT and TPLT…TEPS. Residues 535-554 show a composition bias toward low complexity; the sequence is TSSSTTTESTTVSSTTQSTT. Residues 610–658 form the TSP type-1 domain; it reads ECGCGAWSEWQGECSQQCGGCGHRLRKRECKKEACRKEEKRPCNFSACP. 4 disulfide bridges follow: Cys611/Cys644, Cys623/Cys652, Cys627/Cys657, and Cys639/Cys644. Residues Asn653 and Asn714 are each glycosylated (N-linked (GlcNAc...) asparagine).

It depends on Zn(2+) as a cofactor. As to expression, expressed in the epidermis, the excretory canal cell, duct cell, pore cell, and excretory gland cell. Expressed in an oscillating pattern in epithelial cells with increased expression during the lethargus phase which occurs during molting between larval and adult stages. Not expressed in seam cells or in the RIS neuron.

It localises to the secreted. Functionally, metalloprotease. As part of the innate immune response to molting and injury to the adult epidermis, positively regulates the activity of the transcription factor sta-2 to promote the expression of epidermal antimicrobial peptides such as nlp-29. Through regulating the expression of epidermal antimicrobial peptides such as nlp-29, modulates sleep duration and locomotion quiescence during the sleep-like state called lethargus which occurs during molting between larval and adult stages. This may occur through the sleep-active RIS neuron. The chain is Zinc metalloproteinase nas-38 from Caenorhabditis elegans.